Reading from the N-terminus, the 33-residue chain is Rhinophrynin-33 (33 aa).

Expressed by the skin glands.

The protein resides in the secreted. Its function is as follows. Non-cytotoxic peptide with immunosuppressive and insulinotropic effects. Induces an increased production of the anti-inflammatory cytokine IL-10 and inhibits production of the pro-inflammatory cytokines TNF-alpha and IL-1beta, when incubated with mouse peritoneal cells. Does not display growth-inhibitory activity against the Gram-positive S.epidermidis and Gram-negative E.coli bacteria and against the opportunistic yeast pathogen C.parapsilosis (MIC&gt;128 uM). In addition, it lacks cytotoxic activity against mouse erythrocytes (LC(50)&gt;500 uM) and A549 human non-small cell lung adenocarcinoma cells (LC(50)&gt;100 uM). Moderately stimulates insulin release from rat clonal beta-cells and mouse pancreatic islets. Non-cytotoxic peptide with immunosuppressive but without insulinotropic effects. Inhibits production of the pro-inflammatory cytokines TNF-alpha, but has no effect on IL-10 and IL-1beta production, when incubated with mouse peritoneal cells. Has no activity of stimulation of insulin release. The sequence is that of Rhinophrynin-33 from Rhinophrynus dorsalis (Mexican burrowing toad).